The primary structure comprises 481 residues: 3-isopropylmalate dehydratase large subunit (481 aa).

Cys357, Cys417, and Cys420 together coordinate [4Fe-4S] cluster. Positions 429 to 441 (SPGQRCASTSNRN) are enriched in polar residues. Residues 429–451 (SPGQRCASTSNRNFEGRQGKGGR) form a disordered region.

The protein belongs to the aconitase/IPM isomerase family. LeuC type 1 subfamily. As to quaternary structure, heterodimer of LeuC and LeuD. [4Fe-4S] cluster is required as a cofactor.

It catalyses the reaction (2R,3S)-3-isopropylmalate = (2S)-2-isopropylmalate. The protein operates within amino-acid biosynthesis; L-leucine biosynthesis; L-leucine from 3-methyl-2-oxobutanoate: step 2/4. In terms of biological role, catalyzes the isomerization between 2-isopropylmalate and 3-isopropylmalate, via the formation of 2-isopropylmaleate. The sequence is that of 3-isopropylmalate dehydratase large subunit from Mycobacterium sp. (strain KMS).